The chain runs to 228 residues: uncharacterized protein (228 aa).

The 115-residue stretch at 5–119 (HILIVEDEEK…ELLARIRAAL (115 aa)) folds into the Response regulatory domain. A 4-aspartylphosphate modification is found at Asp54. The ompR/PhoB-type DNA-binding region spans 130-228 (GTFLTYDDLR…IRGVGYAIKG (99 aa)).

In terms of processing, phosphorylated by YkoH.

The protein localises to the cytoplasm. In terms of biological role, probable member of the two-component regulatory system YkoH/YkoG. This is an uncharacterized protein from Bacillus subtilis (strain 168).